A 252-amino-acid chain; its full sequence is MYIIIVSLADPVSRAFLELMGDLPLVETRGDLEIRRLRDTPVVVYRGEPTSFDKEDVLLSVGKHAVFISRHEMANPRPIFTVHTPGSWPDVSVSNPHLASAVLRALCNRLYEPFECAYEATHHTPNTAHISATFVEVGSTDREWGDRKAVGTLLEALEEVLNSPLEEHTPAMVIGDLHYTTVKESALRKEVDIGHVVPKYVEITPAAVETALRKHTVPIKRAILFRKNVKNPARGEILQMLRDRGVEVVLKG.

It belongs to the DtdA deacylase family. Monomer. The cofactor is Zn(2+).

The catalysed reaction is a D-aminoacyl-tRNA + H2O = a tRNA + a D-alpha-amino acid + H(+). It carries out the reaction glycyl-tRNA(Ala) + H2O = tRNA(Ala) + glycine + H(+). Its function is as follows. D-aminoacyl-tRNA deacylase with broad substrate specificity. By recycling D-aminoacyl-tRNA to D-amino acids and free tRNA molecules, this enzyme counteracts the toxicity associated with the formation of D-aminoacyl-tRNA entities in vivo. This Pyrobaculum arsenaticum (strain DSM 13514 / JCM 11321 / PZ6) protein is D-aminoacyl-tRNA deacylase.